Reading from the N-terminus, the 131-residue chain is Small ribosomal subunit protein uS8 (131 aa).

It belongs to the universal ribosomal protein uS8 family. As to quaternary structure, part of the 30S ribosomal subunit. Contacts proteins S5 and S12.

Functionally, one of the primary rRNA binding proteins, it binds directly to 16S rRNA central domain where it helps coordinate assembly of the platform of the 30S subunit. In Bacteroides fragilis (strain ATCC 25285 / DSM 2151 / CCUG 4856 / JCM 11019 / LMG 10263 / NCTC 9343 / Onslow / VPI 2553 / EN-2), this protein is Small ribosomal subunit protein uS8.